We begin with the raw amino-acid sequence, 292 residues long: RNA 5'-monophosphate methyltransferase (292 aa).

The segment at 1–21 is disordered; it reads MAVPTELDGGSVKETAAEEES. S-adenosyl-L-methionine-binding positions include R46, N76, D110, 135 to 136, and M164; that span reads DF. Residues 53 to 274 form the Bin3-type SAM domain; sequence ELLRQLFPES…KQTIETHPIP (222 aa).

Belongs to the methyltransferase superfamily. In terms of assembly, interacts with DICER1; the interaction may be mediated by RNA.

The protein localises to the cytoplasm. It catalyses the reaction a 5'-end 5'-phospho-ribonucleoside-RNA + S-adenosyl-L-methionine = a 5'-end (5'-methylphospho)-ribonucleoside-RNA + S-adenosyl-L-homocysteine. The enzyme catalyses a 5'-end 5'-phospho-ribonucleoside-RNA + 2 S-adenosyl-L-methionine = a 5'-end (5'-bismethylphospho)-ribonucleoside-RNA + 2 S-adenosyl-L-homocysteine. Its function is as follows. O-methyltransferase that specifically monomethylates 5'-monophosphate of cytoplasmic histidyl tRNA (tRNA(His)), acting as a capping enzyme by protecting tRNA(His) from cleavage by DICER1. Also able, with less efficiently, to methylate the 5' monophosphate of a subset of pre-miRNAs, acting as a negative regulator of miRNA processing. The 5' monophosphate of pre-miRNAs is recognized by DICER1 and is required for pre-miRNAs processing: methylation at this position reduces the processing of pre-miRNAs by DICER1. Was also reported to mediate dimethylation of pre-miR-145; however dimethylation cannot be reproduced by another group which observes a monomethylation of pre-miR-145. This is RNA 5'-monophosphate methyltransferase from Homo sapiens (Human).